The chain runs to 1230 residues: Myosin-1 (1230 aa).

A disordered region spans residues 1-32 (MGISRRPKADKNASAADSAPGGKPNIQKAQFD). Positions 39-713 (VGVSDLTLIS…TLFALEHMRD (675 aa)) constitute a Myosin motor domain. 132-139 (GESGAGKT) lines the ATP pocket. An actin-binding region spans residues 403–485 (SIGILDIYGF…PGVFSAMKDA (83 aa)). IQ domains are found at residues 717 to 737 (HNMA…RIEA) and 738 to 763 (ATRI…KGHQ). Residues 771–961 (RRRYSLLGSR…TIHTQAGEPP (191 aa)) enclose the TH1 domain. Disordered regions lie at residues 945–1018 (QDHY…AARP), 1033–1065 (TRNT…PVSK), and 1116–1230 (AYLE…EDDW). The segment covering 1033-1045 (TRNTSVQSTQSTR) has biased composition (polar residues). Composition is skewed to pro residues over residues 1047 to 1062 (VPPP…PPAP) and 1122 to 1142 (TPPP…PGPP). Residues 1064–1123 (SKEPQYRVLYEFAGQSANEFSLKQGEIVTVLQKETNGWWLTKNVRGQGWAPTAYLEEVTP) form the SH3 domain. Positions 1179-1214 (RDSGMSISSNGSGNNSGRSTPTPSLAGGLAEALRAR) are enriched in low complexity.

It belongs to the TRAFAC class myosin-kinesin ATPase superfamily. Myosin family.

Its subcellular location is the cytoplasm. The protein localises to the cytoskeleton. It localises to the actin patch. Functionally, type-I myosin implicated in the organization of the actin cytoskeleton. Required for proper actin cytoskeleton polarization. At the cell cortex, assembles in patch-like structures together with proteins from the actin-polymerizing machinery and promotes actin assembly. Functions as actin nucleation-promoting factor (NPF) for the Arp2/3 complex. The sequence is that of Myosin-1 (myoA) from Sclerotinia sclerotiorum (strain ATCC 18683 / 1980 / Ss-1) (White mold).